The following is a 138-amino-acid chain: ATP synthase epsilon chain (138 aa).

It belongs to the ATPase epsilon chain family. F-type ATPases have 2 components, CF(1) - the catalytic core - and CF(0) - the membrane proton channel. CF(1) has five subunits: alpha(3), beta(3), gamma(1), delta(1), epsilon(1). CF(0) has three main subunits: a, b and c.

It is found in the cell membrane. Produces ATP from ADP in the presence of a proton gradient across the membrane. This is ATP synthase epsilon chain from Streptococcus pyogenes serotype M3 (strain ATCC BAA-595 / MGAS315).